An 87-amino-acid polypeptide reads, in one-letter code: Large ribosomal subunit protein bL31B (87 aa).

Belongs to the bacterial ribosomal protein bL31 family. Type B subfamily. As to quaternary structure, part of the 50S ribosomal subunit.

This is Large ribosomal subunit protein bL31B from Burkholderia vietnamiensis (strain G4 / LMG 22486) (Burkholderia cepacia (strain R1808)).